The primary structure comprises 101 residues: MAKQSMKAREEKRAKLVAQFAEKRATLKAIISDVNASEEDRWNAVLKLQSLPRDSSRSRQRNRCNQTGRPHGFLRKFGLSRIKVREACMKGEIPGLRKASW.

The protein belongs to the universal ribosomal protein uS14 family. Part of the 30S ribosomal subunit. Contacts proteins S3 and S10.

Its function is as follows. Binds 16S rRNA, required for the assembly of 30S particles and may also be responsible for determining the conformation of the 16S rRNA at the A site. In Vibrio cholerae serotype O1 (strain ATCC 39541 / Classical Ogawa 395 / O395), this protein is Small ribosomal subunit protein uS14.